The following is a 555-amino-acid chain: Formate--tetrahydrofolate ligase (555 aa).

An ATP-binding site is contributed by 64–71 (TKAGIGKT).

Belongs to the formate--tetrahydrofolate ligase family.

It carries out the reaction (6S)-5,6,7,8-tetrahydrofolate + formate + ATP = (6R)-10-formyltetrahydrofolate + ADP + phosphate. It functions in the pathway one-carbon metabolism; tetrahydrofolate interconversion. This Bacteroides fragilis (strain ATCC 25285 / DSM 2151 / CCUG 4856 / JCM 11019 / LMG 10263 / NCTC 9343 / Onslow / VPI 2553 / EN-2) protein is Formate--tetrahydrofolate ligase.